The following is a 468-amino-acid chain: ATP synthase subunit beta (468 aa).

155–162 (GGAGVGKT) serves as a coordination point for ATP.

The protein belongs to the ATPase alpha/beta chains family. In terms of assembly, F-type ATPases have 2 components, CF(1) - the catalytic core - and CF(0) - the membrane proton channel. CF(1) has five subunits: alpha(3), beta(3), gamma(1), delta(1), epsilon(1). CF(0) has three main subunits: a(1), b(2) and c(9-12). The alpha and beta chains form an alternating ring which encloses part of the gamma chain. CF(1) is attached to CF(0) by a central stalk formed by the gamma and epsilon chains, while a peripheral stalk is formed by the delta and b chains.

Its subcellular location is the cell membrane. It catalyses the reaction ATP + H2O + 4 H(+)(in) = ADP + phosphate + 5 H(+)(out). Produces ATP from ADP in the presence of a proton gradient across the membrane. The catalytic sites are hosted primarily by the beta subunits. The chain is ATP synthase subunit beta from Enterococcus hirae (strain ATCC 9790 / DSM 20160 / JCM 8729 / LMG 6399 / NBRC 3181 / NCIMB 6459 / NCDO 1258 / NCTC 12367 / WDCM 00089 / R).